Here is a 151-residue protein sequence, read N- to C-terminus: MAYIVALIIIALDQLTKWLVVTSMELGERIPIIDQVLYLYSHRNTGAAFGILQGQMWFFYVVTTIIVGVIIYLIQTEAKGNRLLKIALGLVLGGAIGNFIDRLLRQEVVDFIDTFGDFPIFNIADSALTIGVGLFLLNILIQGRNEKRSTR.

2 helical membrane-spanning segments follow: residues 54-74 (GQMW…IYLI) and 83-103 (LLKI…IDRL). Residues Asp110 and Asp125 contribute to the active site. The helical transmembrane segment at 120 to 140 (IFNIADSALTIGVGLFLLNIL) threads the bilayer.

It belongs to the peptidase A8 family.

It localises to the cell membrane. The enzyme catalyses Release of signal peptides from bacterial membrane prolipoproteins. Hydrolyzes -Xaa-Yaa-Zaa-|-(S,diacylglyceryl)Cys-, in which Xaa is hydrophobic (preferably Leu), and Yaa (Ala or Ser) and Zaa (Gly or Ala) have small, neutral side chains.. It participates in protein modification; lipoprotein biosynthesis (signal peptide cleavage). Functionally, this protein specifically catalyzes the removal of signal peptides from prolipoproteins. The protein is Lipoprotein signal peptidase of Shouchella clausii (strain KSM-K16) (Alkalihalobacillus clausii).